The primary structure comprises 669 residues: DNA ligase (669 aa).

Residues 33–37 (DVTYD), 82–83 (SL), and glutamate 115 contribute to the NAD(+) site. The N6-AMP-lysine intermediate role is filled by lysine 117. NAD(+) contacts are provided by arginine 138, glutamate 172, lysine 286, and lysine 310. Residues cysteine 401, cysteine 404, cysteine 417, and cysteine 422 each contribute to the Zn(2+) site. Positions 589–669 (IDSSFLFGKK…DIKNLVNLDD (81 aa)) constitute a BRCT domain.

It belongs to the NAD-dependent DNA ligase family. LigA subfamily. The cofactor is Mg(2+). It depends on Mn(2+) as a cofactor.

The catalysed reaction is NAD(+) + (deoxyribonucleotide)n-3'-hydroxyl + 5'-phospho-(deoxyribonucleotide)m = (deoxyribonucleotide)n+m + AMP + beta-nicotinamide D-nucleotide.. Functionally, DNA ligase that catalyzes the formation of phosphodiester linkages between 5'-phosphoryl and 3'-hydroxyl groups in double-stranded DNA using NAD as a coenzyme and as the energy source for the reaction. It is essential for DNA replication and repair of damaged DNA. This Borrelia recurrentis (strain A1) protein is DNA ligase.